A 150-amino-acid polypeptide reads, in one-letter code: SsrA-binding protein (150 aa).

Belongs to the SmpB family.

The protein resides in the cytoplasm. Required for rescue of stalled ribosomes mediated by trans-translation. Binds to transfer-messenger RNA (tmRNA), required for stable association of tmRNA with ribosomes. tmRNA and SmpB together mimic tRNA shape, replacing the anticodon stem-loop with SmpB. tmRNA is encoded by the ssrA gene; the 2 termini fold to resemble tRNA(Ala) and it encodes a 'tag peptide', a short internal open reading frame. During trans-translation Ala-aminoacylated tmRNA acts like a tRNA, entering the A-site of stalled ribosomes, displacing the stalled mRNA. The ribosome then switches to translate the ORF on the tmRNA; the nascent peptide is terminated with the 'tag peptide' encoded by the tmRNA and targeted for degradation. The ribosome is freed to recommence translation, which seems to be the essential function of trans-translation. In Campylobacter jejuni subsp. jejuni serotype O:6 (strain 81116 / NCTC 11828), this protein is SsrA-binding protein.